The sequence spans 317 residues: Spore protein CgeB (317 aa).

Its function is as follows. May be involved in maturation of the outermost layer of the spore. May act as a glycosyltransferase that contributes to the glycosylation state of the spore. The polypeptide is Spore protein CgeB (Bacillus subtilis (strain 168)).